The chain runs to 177 residues: Ecotin (177 aa).

Residues 1-23 (MQASIQNRIFFGLVVLWSTTVLE) form the signal peptide. C83 and C122 form a disulfide bridge.

It belongs to the protease inhibitor I11 (ecotin) family. As to quaternary structure, homodimer.

The protein localises to the periplasm. General inhibitor of family S1 serine proteases. The polypeptide is Ecotin (Prochlorococcus marinus (strain MIT 9313)).